The following is a 239-amino-acid chain: 2,3,4,5-tetrahydropyridine-2,6-dicarboxylate N-acetyltransferase (239 aa).

The protein belongs to the transferase hexapeptide repeat family. DapH subfamily.

The catalysed reaction is (S)-2,3,4,5-tetrahydrodipicolinate + acetyl-CoA + H2O = L-2-acetamido-6-oxoheptanedioate + CoA. Its pathway is amino-acid biosynthesis; L-lysine biosynthesis via DAP pathway; LL-2,6-diaminopimelate from (S)-tetrahydrodipicolinate (acetylase route): step 1/3. Its function is as follows. Catalyzes the transfer of an acetyl group from acetyl-CoA to tetrahydrodipicolinate. The sequence is that of 2,3,4,5-tetrahydropyridine-2,6-dicarboxylate N-acetyltransferase from Staphylococcus haemolyticus (strain JCSC1435).